The chain runs to 1423 residues: MTSSVRLAFLATLLLLLPLEAQIQQANSANVNQNVGQQDTGTLFTGTGTNLYYGVNLVPFGPEVGDQEVNPGLLTAGQTIDLHMYFPFYGGLYNYSTLSVNGYIGFATVLDQGPTLNVGPDMTDWPRHEDPAMIAPYLCKQQIPQNLNPGMRSGVFYRLMMRQSLFGRQTGSNMNMGQATYQSSFFGQSASKACPGTPDSYVRCDSQADYFLEEMQRWLIEGVAGAAAFRADAALVVTWYNTASAISGRSDIDSGQLATYQAIWLTDRTARLSYVILNYDRLGFDAADFRQNSRSGRCQALFNGGNHTGLVPVDPTQDFKNTPKVLAQRSGVPQMVRGRYMFRVDDVVRPAGCSNKTGGTYPMLIYPNIVNMLGEMTVDVNAICLDKSQTYILMIEQRQTATCTVLTSAIARCNLPKIFDWGTKTVYFQPQSGGANDEKAFVGYIYFVPPTLDPMRLDIGNVYDWFKNPLPYTTMPLVWYPRNFTNPEMTQHMDQVRMNDDTLYSTQLGLYVIAYREYKDDTIKKFRPEHRVICRLATYSNRNTYEYRWKPQEERINLYQVEQWYMNDWERQNDLYHYRFGYLKLAPLKTNQEQNPQQLLSGLVSSPISLHFLWTSNNPQFATTTYSQQDESARTEYVKKKSLEMCHDWYDEDGAQWNFIRDTETNSSCPCIERQAIADIGRFMPHPRCSQAFRDITCTTSIGSRNCYMSSQNVMTTYAGDGRQYNENLARFPTHYGQVCCYDDQGHLMQTSYQPVIKVTPEVPYNPGFPMRAYEFGTAPYMGQYEVPGLSAFHNDYMPYFLCCKFADFRCQMFYWRRPSSGCQEYQPPAYGEVMGAGTFNTIDNDKFIFNEPGVYNGLYIPHTLSTPEVKVQIRMERYPNRRVDFSLLGRYMAQQDLVQPTNATVVTGVVLEATGTDRVHVVARKDTRRFRYRTSIIVGNILRYFDTMRIQRFKGVMIYVNNVERGQPEIYVVLEEAQIGIRVRESYAIDIDRLSEYQESMGILNIAVSVPPQYGVRPDGDKTREQEIRQRYNLPRVSGVFRPFPDQSSGSYLNTLTLNDVNSETYRQQIINMYRVQGSGEPGSDQNINNQGNNYGMPTENMFTTSRDEDKKFEVFPEAQMKSGPIFKTSPKYETGAYRFYPMTGQVLNQRLQTCRDMQQNTNINMQPLQSQLTGEYGQTQCPDNPSSIIQDCGDSVPCLYDYYNFNAKLLGLNVKNEWNTFTSDRFDASRQYNSCGVINIEYPEYLMKTSSMSSAYLQGDVARFECFQSHWIYGVHEYKCGIVVDRNQRNIIDPRDYRFEWNKGEQPWCRSREKQNFLTWLAIIGGIFGVLVFVILIFLCCWIVKQKKKGEAAERRGYDMASRSSMTGSRGGKKYPIHESEPLNEKRFDADTYRDDDFYPPAREEQYAARNEDLHGLKTSV.

The first 28 residues, 1 to 28 (MTSSVRLAFLATLLLLLPLEAQIQQANS), serve as a signal peptide directing secretion. Residues 29-1321 (ANVNQNVGQQ…RSREKQNFLT (1293 aa)) are Extracellular-facing. 6 N-linked (GlcNAc...) asparagine glycosylation sites follow: Asn-94, Asn-306, Asn-355, Asn-483, Asn-666, and Asn-903. The 164-residue stretch at 184 to 347 (SFFGQSASKA…GRYMFRVDDV (164 aa)) folds into the NIDO domain. Positions 638–818 (VKKKSLEMCH…FRCQMFYWRR (181 aa)) constitute an AMOP domain. A helical transmembrane segment spans residues 1322 to 1342 (WLAIIGGIFGVLVFVILIFLC). Residues 1343–1423 (CWIVKQKKKG…EDLHGLKTSV (81 aa)) are Cytoplasmic-facing. A disordered region spans residues 1364–1401 (SRSSMTGSRGGKKYPIHESEPLNEKRFDADTYRDDDFY). Positions 1378 to 1401 (PIHESEPLNEKRFDADTYRDDDFY) are enriched in basic and acidic residues.

The protein localises to the membrane. This is an uncharacterized protein from Caenorhabditis elegans.